A 78-amino-acid polypeptide reads, in one-letter code: Protein Class8-like (78 aa).

The N-terminal stretch at 1–19 (MRTLVVLLIGAVLLCSANA) is a signal peptide. A propeptide spanning residues 20–36 (FLDELLAESVNDMTDKR) is cleaved from the precursor. The ShKT domain occupies 38–78 (CFDKYKSNICGGVISPAHCVRRSGRMAKFAKENCAHFCGFC). Disulfide bonds link C38–C78, C47–C71, and C56–C75.

In terms of tissue distribution, expressed in ganglion neurons residing in the mesoglea (observed in both planulae and primary polyps). Not expressed in nematocytes.

Its function is as follows. Probable neuropeptide. The chain is Protein Class8-like from Nematostella vectensis (Starlet sea anemone).